The sequence spans 141 residues: Sigma factor binding protein 2, chloroplastic (141 aa).

Residues 1–20 (MDQSSSTLLINQRKSSSSPT) show a composition bias toward polar residues. The segment at 1 to 36 (MDQSSSTLLINQRKSSSSPTRIPPKQKRKSTTTHKP) is disordered. A chloroplast-targeting transit peptide spans 1–38 (MDQSSSTLLINQRKSSSSPTRIPPKQKRKSTTTHKPIK). The short motif at 13–29 (RKSSSSPTRIPPKQKRK) is the Bipartite nuclear localization signal element. Basic residues predominate over residues 24–36 (PKQKRKSTTTHKP). Residues 55-64 (FRELVQELTG) carry the VQ motif.

As to quaternary structure, interacts with sigma factors in chloroplast. Interacts with WRKY33 in the nucleus.

It localises to the plastid. It is found in the chloroplast. The protein resides in the nucleus. Functionally, functions as activator of WRKY33 in plant defense against necrotrophic pathogens by stimulating the DNA-binding activity of WRKY33. The polypeptide is Sigma factor binding protein 2, chloroplastic (SIB2) (Arabidopsis thaliana (Mouse-ear cress)).